Consider the following 1272-residue polypeptide: uncharacterized protein (1272 aa).

3 coiled-coil regions span residues 185–212, 246–274, and 607–640; these read IEFLDEIEKAELKKRRKEGNLTIEEAVN, KNSAEEKEKKLRLSKKKEQLEKIQEYLDA, and ALGKDLEKLIKLVNDHDQEIQKIYKEVEKLNTVI. The disordered stretch occupies residues 1179–1231; it reads ELPETSQQPVVPTPPATRPSSPIPPESDILTEEEQLEEQPPRQQQATRKTTTT. Residues 1189–1203 show a composition bias toward pro residues; sequence VPTPPATRPSSPIPP. Positions 1219 to 1231 are enriched in low complexity; sequence PRQQQATRKTTTT.

This is an uncharacterized protein from Magallana gigas (Pacific oyster).